The chain runs to 89 residues: Small ribosomal subunit protein uS15 (89 aa).

This sequence belongs to the universal ribosomal protein uS15 family. In terms of assembly, part of the 30S ribosomal subunit. Forms a bridge to the 50S subunit in the 70S ribosome, contacting the 23S rRNA.

In terms of biological role, one of the primary rRNA binding proteins, it binds directly to 16S rRNA where it helps nucleate assembly of the platform of the 30S subunit by binding and bridging several RNA helices of the 16S rRNA. Functionally, forms an intersubunit bridge (bridge B4) with the 23S rRNA of the 50S subunit in the ribosome. The polypeptide is Small ribosomal subunit protein uS15 (Rhodococcus erythropolis (strain PR4 / NBRC 100887)).